Here is a 148-residue protein sequence, read N- to C-terminus: Large ribosomal subunit protein uL15A (148 aa).

Basic residues-rich tracts occupy residues 1–13 and 21–31; these read MPTH…KLRG and RIGKHRKHPGG. The interval 1-36 is disordered; that stretch reads MPTHVSKTRKLRGHVSAGHGRIGKHRKHPGGRGKAG.

Belongs to the universal ribosomal protein uL15 family. In terms of assembly, component of the large ribosomal subunit (LSU). Mature yeast ribosomes consist of a small (40S) and a large (60S) subunit. The 40S small subunit contains 1 molecule of ribosomal RNA (18S rRNA) and at least 33 different proteins. The large 60S subunit contains 3 rRNA molecules (25S, 5.8S and 5S rRNA) and at least 46 different proteins.

The protein localises to the cytoplasm. In terms of biological role, component of the ribosome, a large ribonucleoprotein complex responsible for the synthesis of proteins in the cell. The small ribosomal subunit (SSU) binds messenger RNAs (mRNAs) and translates the encoded message by selecting cognate aminoacyl-transfer RNA (tRNA) molecules. The large subunit (LSU) contains the ribosomal catalytic site termed the peptidyl transferase center (PTC), which catalyzes the formation of peptide bonds, thereby polymerizing the amino acids delivered by tRNAs into a polypeptide chain. The nascent polypeptides leave the ribosome through a tunnel in the LSU and interact with protein factors that function in enzymatic processing, targeting, and the membrane insertion of nascent chains at the exit of the ribosomal tunnel. The sequence is that of Large ribosomal subunit protein uL15A (rpl2802) from Schizosaccharomyces pombe (strain 972 / ATCC 24843) (Fission yeast).